Consider the following 525-residue polypeptide: MTENIHKHRILILDFGSQYTQLVARRVRELGVYCELWAWDVTEAQIREFNPSGIILSGGPESTTEENSPRAPQYVFEAGVPVFGVCYGMQTMAMQLGGHVEGSNEREFGYAQVEVVNDSALVRGIEDSLTADGKPLLDVWMSHGDKVTAIPSDFVTVASTDNCPFAIMANEEKRFYGVQFHPEVTHTRQGMRMLERFVRDICQCEALWTPAKIIDDAVERIRQQVGDDKVILGLSGGVDSSVTAMLLHRAIGKNLTCVFVDNGLLRLNEAQQVMDMFGDHFGLNIVHVEGEQRFLDALKGENDPEAKRKIIGRVFVEVFDEEALKLDDVKWLAQGTIYPDVIESAASATGKAHVIKSHHNVGGLPKEMKMGLVEPLRELFKDEVRKIGLELGLPYDMLYRHPFPGPGLGVRVLGEVKKEYCDLLRRADAIFIEELHKADLYNKVSQAFTVFLPVRSVGVMGDGRKYDWVVSLRAVETIDFMTAHWAHLPYDFLGRVSNRIINEVNGISRVVYDISGKPPATIEWE.

The Glutamine amidotransferase type-1 domain occupies 9–207 (RILILDFGSQ…VRDICQCEAL (199 aa)). The active-site Nucleophile is the Cys-86. Active-site residues include His-181 and Glu-183. Positions 208–400 (WTPAKIIDDA…LGLPYDMLYR (193 aa)) constitute a GMPS ATP-PPase domain. 235–241 (SGGVDSS) contacts ATP.

As to quaternary structure, homodimer.

The catalysed reaction is XMP + L-glutamine + ATP + H2O = GMP + L-glutamate + AMP + diphosphate + 2 H(+). It functions in the pathway purine metabolism; GMP biosynthesis; GMP from XMP (L-Gln route): step 1/1. Catalyzes the synthesis of GMP from XMP. The chain is GMP synthase [glutamine-hydrolyzing] from Klebsiella pneumoniae (strain 342).